A 339-amino-acid polypeptide reads, in one-letter code: MKVEAITKEETKKPERKIKLAIAKPEDYSNKNVILEKEEELICPVCGSKNIIKDYERAEIVCEMCGCVLQQNLFDVGPEWRAFDHEQRVKRSRVGAPMTYTIHDKGLSTVIDWRNKDSYGKDISADKRAQLYRLRKWQRRIRVSDASERNLAFALSELDRIASKLGLPRNVRENAAVLYRGAVEKGLIRGRSIEGVAAAALYAACRRCKVPRTLDEIAEVSRVDRKEIGRTYRFISRELNIRLAPTNPVDYVPRFASELKLPGEVESKAISILQKAGEKGLTSGRGPTGVAAAAIYIASVLQGTRRTQREVADVAGVTEVTIRNRYKELTEHLDIDVTL.

The segment at 39-70 (EELICPVCGSKNIIKDYERAEIVCEMCGCVLQ) adopts a TFIIB-type zinc-finger fold. Positions 43, 46, 62, and 65 each coordinate Zn(2+). 2 repeat units span residues 156 to 239 (SELD…SREL) and 250 to 331 (DYVP…ELTE).

It belongs to the TFIIB family.

In terms of biological role, stabilizes TBP binding to an archaeal box-A promoter. Also responsible for recruiting RNA polymerase II to the pre-initiation complex (DNA-TBP-TFIIB). The chain is Transcription initiation factor IIB from Methanococcus maripaludis (strain C6 / ATCC BAA-1332).